Here is a 209-residue protein sequence, read N- to C-terminus: MFFEIIGMIIIAYLLGSIPTGLWIGKYIYHKDIRKLGSGNIGTTNTFRTLGFKAGVVVLFIDILKGTLAASQPYFLGISGTVNPLLIGLFASLGHTVSIFDNFHGGKAVATSAGILLAYNPLLFVVACLIFIFVLCLTSMVSAASMVGISAIFIIALFIHAWILAIVAGILTGVVFYRHRSNIHRILSGKESMVSFGLGYYLREKKQNK.

The next 5 membrane-spanning stretches (helical) occupy residues 5–25 (IIGM…LWIG), 50–70 (LGFK…TLAA), 74–94 (YFLG…ASLG), 115–135 (ILLA…IFVL), and 151–171 (AIFI…AGIL).

It belongs to the PlsY family. In terms of assembly, probably interacts with PlsX.

Its subcellular location is the cell membrane. It catalyses the reaction an acyl phosphate + sn-glycerol 3-phosphate = a 1-acyl-sn-glycero-3-phosphate + phosphate. Its pathway is lipid metabolism; phospholipid metabolism. In terms of biological role, catalyzes the transfer of an acyl group from acyl-phosphate (acyl-PO(4)) to glycerol-3-phosphate (G3P) to form lysophosphatidic acid (LPA). This enzyme utilizes acyl-phosphate as fatty acyl donor, but not acyl-CoA or acyl-ACP. In Limosilactobacillus reuteri (strain DSM 20016) (Lactobacillus reuteri), this protein is Glycerol-3-phosphate acyltransferase.